The sequence spans 334 residues: Biotin synthase (334 aa).

Residues 55–285 (GSSGSIHACS…VHPRKIIKIA (231 aa)) form the Radical SAM core domain. Positions 73, 77, and 80 each coordinate [4Fe-4S] cluster. Positions 152, 213, and 283 each coordinate [2Fe-2S] cluster.

It belongs to the radical SAM superfamily. Biotin synthase family. In terms of assembly, homodimer. It depends on [4Fe-4S] cluster as a cofactor. Requires [2Fe-2S] cluster as cofactor.

It catalyses the reaction (4R,5S)-dethiobiotin + (sulfur carrier)-SH + 2 reduced [2Fe-2S]-[ferredoxin] + 2 S-adenosyl-L-methionine = (sulfur carrier)-H + biotin + 2 5'-deoxyadenosine + 2 L-methionine + 2 oxidized [2Fe-2S]-[ferredoxin]. It participates in cofactor biosynthesis; biotin biosynthesis; biotin from 7,8-diaminononanoate: step 2/2. In terms of biological role, catalyzes the conversion of dethiobiotin (DTB) to biotin by the insertion of a sulfur atom into dethiobiotin via a radical-based mechanism. This chain is Biotin synthase, found in Chlorobium phaeobacteroides (strain DSM 266 / SMG 266 / 2430).